The following is a 1026-amino-acid chain: Multidrug resistance protein MdtC (1026 aa).

11 helical membrane passes run 12-32 (VATT…FSLL), 333-353 (EVEQ…FIFL), 360-380 (LIPA…MYLC), 387-407 (LSLM…IVVL), 431-451 (VGFT…PLLL), 463-483 (FAVT…TLTP), 528-548 (WVLA…VSIP), 853-873 (LLLI…LYES), 897-917 (LFGA…IGIV), 953-973 (PIMM…LTHG), and 984-1004 (ITIV…TPVV).

The protein belongs to the resistance-nodulation-cell division (RND) (TC 2.A.6) family. MdtC subfamily. In terms of assembly, part of a tripartite efflux system composed of MdtA, MdtB and MdtC. MdtC forms a heteromultimer with MdtB.

The protein resides in the cell inner membrane. In Serratia proteamaculans (strain 568), this protein is Multidrug resistance protein MdtC.